The following is a 1157-amino-acid chain: Myosin tail region-interacting protein MTI1 (1157 aa).

One can recognise an SH3 domain in the interval 5–69; the sequence is EVPFKVVAQF…PKSFVAVQGS (65 aa). Disordered regions lie at residues 68–116 and 135–156; these read GSEV…GPVP and TAVSAQVQHDSSSGNGERKVPM. Residues 77–89 show a composition bias toward polar residues; that stretch reads SSPNTGSTEQRTI. Positions 93–110 are enriched in basic and acidic residues; it reads VEQKDLPEPISPETKKET. The residue at position 103 (serine 103) is a Phosphoserine. Polar residues predominate over residues 138–149; sequence SAQVQHDSSSGN. Serine 158 and serine 166 each carry phosphoserine. Disordered stretches follow at residues 231–256 and 284–888; these read PEPINRAQVESGRIETENDQLKKDLP and KKAK…PKVA. 2 coiled-coil regions span residues 234 to 301 and 356 to 430; these read INRA…NKNE and EKEQ…GASR. 3 stretches are compositionally biased toward basic and acidic residues: residues 242–256, 284–296, and 312–383; these read GRIETENDQLKKDLP, KKAKLEQEHERSA, and NEKT…RGEN. Positions 398-411 are enriched in acidic residues; sequence EGDNDEEKEEEDSE. 2 stretches are compositionally biased toward basic and acidic residues: residues 412 to 423 and 506 to 524; these read ENRRAALRERMA and KTLDPHATTEHEQKQEHGT. Residues 544–558 are compositionally biased toward acidic residues; the sequence is DSDEDTDDHEFEDAN. Serine 565 carries the post-translational modification Phosphoserine. Over residues 574-585 the composition is skewed to low complexity; sequence GNNESENVNSGE. Residues 597–606 show a composition bias toward basic and acidic residues; that stretch reads RTAEVSHDIE. Polar residues predominate over residues 607-641; sequence NSSQNTTGNVLPVSSPQTRVARNGSINSLTKSISG. Serine 621, serine 631, and serine 634 each carry phosphoserine. Residue threonine 636 is modified to Phosphothreonine. Phosphoserine occurs at positions 638 and 647. A compositionally biased stretch (basic and acidic residues) spans 642–653; sequence ENRRKSINEYHD. The segment covering 654 to 668 has biased composition (polar residues); that stretch reads TVSTNSSALTETAQD. Pro residues-rich tracts occupy residues 691-738 and 747-765; these read PHPV…PVSS and SIPPVPPTPPAPPAPPAPL. Over residues 769-778 the composition is skewed to basic and acidic residues; it reads KHNEVEEHVK. Positions 795 to 808 are enriched in pro residues; sequence NTAPPLPRAPPVPP. The span at 832 to 853 shows a compositional bias: polar residues; that stretch reads QNVTASTPSMMSTQQRVPTSVL. Threonine 850 carries the post-translational modification Phosphothreonine. The residue at position 889 (serine 889) is a Phosphoserine. Phosphothreonine occurs at positions 894 and 895. A Glycyl lysine isopeptide (Lys-Gly) (interchain with G-Cter in ubiquitin) cross-link involves residue lysine 1012.

As to quaternary structure, binds to the SH3 domains of the type I myosins MYO3 and MYO5.

It is found in the cytoplasm. The protein resides in the cytoskeleton. Its subcellular location is the actin patch. In terms of biological role, involved in the regulation of actin cytoskeleton. The polypeptide is Myosin tail region-interacting protein MTI1 (BBC1) (Saccharomyces cerevisiae (strain ATCC 204508 / S288c) (Baker's yeast)).